The primary structure comprises 242 residues: Orotidine 5'-phosphate decarboxylase (242 aa).

Residues Asp-16, Lys-37, Asp-64 to Thr-73, Thr-128, Arg-190, Gln-199, Gly-219, and Arg-220 each bind substrate. The active-site Proton donor is the Lys-66.

The protein belongs to the OMP decarboxylase family. Type 1 subfamily. As to quaternary structure, homodimer.

It carries out the reaction orotidine 5'-phosphate + H(+) = UMP + CO2. It participates in pyrimidine metabolism; UMP biosynthesis via de novo pathway; UMP from orotate: step 2/2. Its function is as follows. Catalyzes the decarboxylation of orotidine 5'-monophosphate (OMP) to uridine 5'-monophosphate (UMP). The polypeptide is Orotidine 5'-phosphate decarboxylase (Prochlorococcus marinus (strain MIT 9215)).